Consider the following 33-residue polypeptide: Gastrin (33 aa).

2 positions are modified to pyrrolidone carboxylic acid: Gln-1 and Gln-18. Tyr-28 bears the Sulfotyrosine mark. Phe-33 carries the phenylalanine amide modification.

The protein belongs to the gastrin/cholecystokinin family.

It localises to the secreted. Its function is as follows. Gastrin stimulates the stomach mucosa to produce and secrete hydrochloric acid and the pancreas to secrete its digestive enzymes. It also stimulates smooth muscle contraction and increases blood circulation and water secretion in the stomach and intestine. The polypeptide is Gastrin (GAST) (Didelphis virginiana (North American opossum)).